A 699-amino-acid polypeptide reads, in one-letter code: Polyribonucleotide nucleotidyltransferase (699 aa).

Mg(2+)-binding residues include D485 and D491. One can recognise a KH domain in the interval 552–611 (PRITVIKINPEKIRDVIGKGGAVIRALTEETGTTIELEDDGTVKIASSNGEATKEAIRRI). Positions 621–689 (GRIYNGKVIR…RQGRVRLSIK (69 aa)) constitute an S1 motif domain.

Belongs to the polyribonucleotide nucleotidyltransferase family. As to quaternary structure, component of the RNA degradosome, which is a multiprotein complex involved in RNA processing and mRNA degradation. Mg(2+) is required as a cofactor.

The protein resides in the cytoplasm. The catalysed reaction is RNA(n+1) + phosphate = RNA(n) + a ribonucleoside 5'-diphosphate. Functionally, involved in mRNA degradation. Catalyzes the phosphorolysis of single-stranded polyribonucleotides processively in the 3'- to 5'-direction. This chain is Polyribonucleotide nucleotidyltransferase, found in Shewanella baltica (strain OS223).